Here is a 245-residue protein sequence, read N- to C-terminus: MNVTLLIPARYGSSRFPGKPLAPINGKPMIQHVYERASLAKGLTNIYVATDDERIKSAVEGFGGKVVMTSPDAASGTDRINDAINQLGLKDDDLVINLQGDQPLIDPTSIEQVISLFERHPGEFEMATLGYEIVNKAELDDPMHVKMVFDNDYYALYFSRARIPFGRDTKDYPVYKHLGVYAYTRRFVQAFAALPLGRLEDLEKLEQLRALEYGHKIKVAISAFDSIEVDTPEDIRKCEQRLAVD.

It belongs to the KdsB family.

It localises to the cytoplasm. It carries out the reaction 8-amino-3,8-dideoxy-alpha-D-manno-octulosonate + CTP = CMP-8-amino-3,8-dideoxy-alpha-D-manno-oct-2-ulosonate + diphosphate. It functions in the pathway bacterial outer membrane biogenesis; lipopolysaccharide biosynthesis. Its function is as follows. Activates KDO8N (a required 8-carbon sugar) for incorporation into bacterial lipopolysaccharide in the Shewanella genus. This Shewanella oneidensis (strain ATCC 700550 / JCM 31522 / CIP 106686 / LMG 19005 / NCIMB 14063 / MR-1) protein is 8-amino-3,8-dideoxy-manno-octulosonate cytidylyltransferase.